Consider the following 430-residue polypeptide: UDP-glucose 6-dehydrogenase AglM (430 aa).

The active site involves Cys269.

It belongs to the UDP-glucose/GDP-mannose dehydrogenase family.

It carries out the reaction UDP-alpha-D-glucose + 2 NAD(+) + H2O = UDP-alpha-D-glucuronate + 2 NADH + 3 H(+). Its pathway is nucleotide-sugar biosynthesis; UDP-alpha-D-glucuronate biosynthesis; UDP-alpha-D-glucuronate from UDP-alpha-D-glucose: step 1/1. The protein operates within cell surface structure biogenesis; S-layer biogenesis. Its activity is regulated as follows. Activity improves as salinity decreases. Functionally, involved in the assembly of a N-linked pentasaccharide that decorates the S-layer glycoprotein and flagellins. Involved in the biosynthesis of the hexuronic acids found at both positions 2 and 3 of the pentasaccharide. This chain is UDP-glucose 6-dehydrogenase AglM (aglM), found in Haloferax volcanii (strain ATCC 29605 / DSM 3757 / JCM 8879 / NBRC 14742 / NCIMB 2012 / VKM B-1768 / DS2) (Halobacterium volcanii).